A 1066-amino-acid chain; its full sequence is Thyrotropin-releasing hormone-degrading ectoenzyme (1066 aa).

Basic and acidic residues predominate over residues Met-1–Lys-14. A disordered region spans residues Met-1–Gly-43. The Cytoplasmic portion of the chain corresponds to Met-1 to Leu-81. Positions Lys-15–Lys-25 are enriched in basic residues. The residue at position 71 (Thr-71) is a Phosphothreonine; by PKC. Residues Val-82–Leu-102 form a helical; Signal-anchor for type II membrane protein membrane-spanning segment. The Extracellular segment spans residues Ser-103–His-1066. The segment at Gly-117–Pro-177 is disordered. The span at Thr-118–Glu-127 shows a compositional bias: gly residues. An N-linked (GlcNAc...) asparagine glycan is attached at Asn-131. The segment covering His-143 to Gly-154 has biased composition (basic and acidic residues). 4 N-linked (GlcNAc...) asparagine glycosylation sites follow: Asn-202, Asn-217, Asn-264, and Asn-380. Ala-446–Asn-450 provides a ligand contact to substrate. His-482 serves as a coordination point for Zn(2+). Glu-483 (proton acceptor) is an active-site residue. Residues His-486 and Glu-505 each contribute to the Zn(2+) site. N-linked (GlcNAc...) asparagine glycosylation is found at Asn-647, Asn-676, Asn-691, Asn-705, Asn-726, Asn-842, and Asn-948.

The protein belongs to the peptidase M1 family. In terms of assembly, homodimer; disulfide-linked. Zn(2+) is required as a cofactor. In terms of tissue distribution, predominantly expressed in brain and pituitary. Lower levels in lung and liver.

The protein localises to the membrane. The enzyme catalyses Release of the N-terminal pyroglutamyl group from pGlu-|-His-Xaa tripeptides and pGlu-|-His-Xaa-Gly tetrapeptides.. Specific inactivation of TRH after its release. This chain is Thyrotropin-releasing hormone-degrading ectoenzyme (Trhde), found in Rattus norvegicus (Rat).